The chain runs to 254 residues: MYPVITVPAFNDNYIWLIRHENHCLVVDPGDAEPVLERLAALDLQLDAILLTHHHHDHVGGVTALLGHFPHARLYGPKLDPMPAHHGQWLDDGDQINWHGLSLEVIHVPGHTHGHIAYYGHGMLFCGDTLFSAGCGRLFEGTPAQMHASLQRLAALPDDTLIYCAHEYTLSNLRFAYAVEPDNHAIQQRIGLISKLRQQGLPSLPSRLGDEREFNVFLRCEQDSVKFSAEKHALKCLENPEDTFTVLRSWKDVF.

Zn(2+)-binding residues include histidine 53, histidine 55, aspartate 57, histidine 58, histidine 111, aspartate 128, and histidine 166.

This sequence belongs to the metallo-beta-lactamase superfamily. Glyoxalase II family. As to quaternary structure, monomer. Zn(2+) serves as cofactor.

It carries out the reaction an S-(2-hydroxyacyl)glutathione + H2O = a 2-hydroxy carboxylate + glutathione + H(+). It participates in secondary metabolite metabolism; methylglyoxal degradation; (R)-lactate from methylglyoxal: step 2/2. In terms of biological role, thiolesterase that catalyzes the hydrolysis of S-D-lactoyl-glutathione to form glutathione and D-lactic acid. This Aeromonas hydrophila subsp. hydrophila (strain ATCC 7966 / DSM 30187 / BCRC 13018 / CCUG 14551 / JCM 1027 / KCTC 2358 / NCIMB 9240 / NCTC 8049) protein is Hydroxyacylglutathione hydrolase.